Here is a 503-residue protein sequence, read N- to C-terminus: Probable cytosol aminopeptidase (503 aa).

Positions 270 and 275 each coordinate Mn(2+). Residue K282 is part of the active site. D293, D352, and E354 together coordinate Mn(2+). R356 is a catalytic residue.

The protein belongs to the peptidase M17 family. Requires Mn(2+) as cofactor.

The protein localises to the cytoplasm. It catalyses the reaction Release of an N-terminal amino acid, Xaa-|-Yaa-, in which Xaa is preferably Leu, but may be other amino acids including Pro although not Arg or Lys, and Yaa may be Pro. Amino acid amides and methyl esters are also readily hydrolyzed, but rates on arylamides are exceedingly low.. The catalysed reaction is Release of an N-terminal amino acid, preferentially leucine, but not glutamic or aspartic acids.. In terms of biological role, presumably involved in the processing and regular turnover of intracellular proteins. Catalyzes the removal of unsubstituted N-terminal amino acids from various peptides. This Shigella flexneri protein is Probable cytosol aminopeptidase.